We begin with the raw amino-acid sequence, 470 residues long: Histidine--tRNA ligase (470 aa).

Residues 69–99 (GIDPILPPNRQAEKDKSGETGKDKSGETGSE) form a disordered region. Basic and acidic residues predominate over residues 79–94 (QAEKDKSGETGKDKSG).

This sequence belongs to the class-II aminoacyl-tRNA synthetase family. Homodimer.

It is found in the cytoplasm. The catalysed reaction is tRNA(His) + L-histidine + ATP = L-histidyl-tRNA(His) + AMP + diphosphate + H(+). The chain is Histidine--tRNA ligase from Nostoc punctiforme (strain ATCC 29133 / PCC 73102).